Consider the following 542-residue polypeptide: 4-coumarate--CoA ligase-like 1 (542 aa).

ATP-binding residues include Ser-189, Ser-190, Gly-191, Thr-192, Thr-193, and Lys-197. Tyr-237 contacts (E)-4-coumaroyl-AMP. Arg-258 contributes to the CoA binding site. The tract at residues 260 to 331 (DLRIFLNALI…AKFPNVQVQE (72 aa)) is SBD1. (E)-4-coumaroyl-AMP is bound by residues Ala-309, Glu-331, Ala-332, and Thr-336. Residues Glu-331, Ala-332, Thr-336, Asp-420, and Arg-435 each contribute to the ATP site. The interval 332–399 (AYGLTEHSCI…VRSQCVMQGY (68 aa)) is SBD2. Positions 437 and 441 each coordinate (E)-4-coumaroyl-AMP. Residues Lys-443 and Gly-444 each contribute to the CoA site. Lys-526 serves as a coordination point for ATP.

It belongs to the ATP-dependent AMP-binding enzyme family. Interacts with TKPR1, PKSA and PKSB. Mg(2+) is required as a cofactor. As to expression, mostly confined to anther tapetal cells.

Its subcellular location is the endoplasmic reticulum. The catalysed reaction is (E)-4-coumarate + ATP + CoA = (E)-4-coumaroyl-CoA + AMP + diphosphate. The enzyme catalyses (E)-4-coumarate + ATP + H(+) = (E)-4-coumaroyl-AMP + diphosphate. It carries out the reaction (E)-4-coumaroyl-AMP + CoA = (E)-4-coumaroyl-CoA + AMP + H(+). Functionally, carboxylate--CoA ligase that may use 4-coumarate as substrate. Follows a two-step reaction mechanism, wherein the carboxylate substrate first undergoes adenylation by ATP, followed by a thioesterification in the presence of CoA to yield the final CoA thioester. The polypeptide is 4-coumarate--CoA ligase-like 1 (Arabidopsis thaliana (Mouse-ear cress)).